Consider the following 92-residue polypeptide: DNA-directed RNA polymerase subunit Rpo11 (92 aa).

The protein belongs to the archaeal Rpo11/eukaryotic RPB11/RPC19 RNA polymerase subunit family. In terms of assembly, part of the RNA polymerase complex.

The protein localises to the cytoplasm. It carries out the reaction RNA(n) + a ribonucleoside 5'-triphosphate = RNA(n+1) + diphosphate. DNA-dependent RNA polymerase (RNAP) catalyzes the transcription of DNA into RNA using the four ribonucleoside triphosphates as substrates. The chain is DNA-directed RNA polymerase subunit Rpo11 from Methanosarcina mazei (strain ATCC BAA-159 / DSM 3647 / Goe1 / Go1 / JCM 11833 / OCM 88) (Methanosarcina frisia).